Consider the following 362-residue polypeptide: Biotin synthase (362 aa).

Residues 39–267 (NVVQVSTLLS…ETQVRLSAGR (229 aa)) form the Radical SAM core domain. [4Fe-4S] cluster-binding residues include Cys-54, Cys-58, and Cys-61. Positions 98, 130, 190, and 262 each coordinate [2Fe-2S] cluster. The segment at 317–362 (PFTKVSQPTTVEAKDSRYESLGEKPKWSRPSHTIEKNLELSGKGKN) is disordered. Positions 328 to 354 (EAKDSRYESLGEKPKWSRPSHTIEKNL) are enriched in basic and acidic residues.

This sequence belongs to the radical SAM superfamily. Biotin synthase family. In terms of assembly, homodimer. It depends on [4Fe-4S] cluster as a cofactor. [2Fe-2S] cluster serves as cofactor.

It carries out the reaction (4R,5S)-dethiobiotin + (sulfur carrier)-SH + 2 reduced [2Fe-2S]-[ferredoxin] + 2 S-adenosyl-L-methionine = (sulfur carrier)-H + biotin + 2 5'-deoxyadenosine + 2 L-methionine + 2 oxidized [2Fe-2S]-[ferredoxin]. It functions in the pathway cofactor biosynthesis; biotin biosynthesis; biotin from 7,8-diaminononanoate: step 2/2. Functionally, catalyzes the conversion of dethiobiotin (DTB) to biotin by the insertion of a sulfur atom into dethiobiotin via a radical-based mechanism. In Flavobacterium psychrophilum (strain ATCC 49511 / DSM 21280 / CIP 103535 / JIP02/86), this protein is Biotin synthase.